Consider the following 637-residue polypeptide: Proton myo-inositol cotransporter (637 aa).

The Cytoplasmic segment spans residues 1 to 65 (MSRKASEDVE…AARRQFQRDE (65 aa)). Ser6 carries the phosphoserine modification. A disordered region spans residues 16-38 (LSSLMGERRRRQPEPGAPGGERS). 2 positions are modified to phosphoserine: Ser44 and Ser47. A helical transmembrane segment spans residues 66 to 86 (TPAFVYAAAAFSALGGFLFGY). Over 87-114 (DTGVVSGAMLLLRRQMRLGAMWQELLVS) the chain is Extracellular. A helical transmembrane segment spans residues 115-135 (GAVGAAAVAALAGGALNGALG). Residues 136-137 (RR) are Cytoplasmic-facing. A helical membrane pass occupies residues 138 to 158 (SAILLASALCTVGSAVLAAAA). Topologically, residues 159–167 (NKETLLAGR) are extracellular. A helical membrane pass occupies residues 168–188 (LVVGLGIGIASMTVPVYIAEV). The Cytoplasmic segment spans residues 189 to 201 (SPPNLRGRLVTIN). The chain crosses the membrane as a helical span at residues 202–222 (TLFITGGQFFASVVDGAFSYL). Over 223 to 228 (QKDGWR) the chain is Extracellular. The helical transmembrane segment at 229–249 (YMLGLAAIPAVIQFLGFLFLP) threads the bilayer. The Cytoplasmic segment spans residues 250 to 313 (ESPRWLIQKG…RMLSYPPTRR (64 aa)). The chain crosses the membrane as a helical span at residues 314–334 (ALAVGCGLQMFQQLSGINTIM). Over 335-352 (YYSATILQMSGVEDDRLA) the chain is Extracellular. Residues 353-373 (IWLASITAFTNFIFTLVGVWL) traverse the membrane as a helical segment. Over 374-382 (VEKVGRRKL) the chain is Cytoplasmic. A helical membrane pass occupies residues 383–403 (TFGSLAGTTVALTILALGFLL). Over 404-497 (SAQVSPRVTF…SFCPTPYSWT (94 aa)) the chain is Extracellular. Residues Asn422, Asn447, and Asn474 are each glycosylated (N-linked (GlcNAc...) asparagine). Residues 498-518 (ALVGLVLYLVFFAPGMGPMPW) traverse the membrane as a helical segment. Topologically, residues 519–538 (TVNSEIYPLWARSTGNACSA) are cytoplasmic. Residues 539–559 (GINWIFNVLVSLTFLHTAEYL) form a helical membrane-spanning segment. The Extracellular portion of the chain corresponds to 560–562 (TYY). A helical membrane pass occupies residues 563-583 (GAFFLYAGFAAVGLLFVYGCL). Topologically, residues 584 to 637 (PETKGKKLEEIESLFDHRLCTCGTADSDEGRYIEYIRVKGSNYHLSDNDASDVE) are cytoplasmic. Residues Ser629 and Ser634 each carry the phosphoserine modification.

Belongs to the major facilitator superfamily. Sugar transporter (TC 2.A.1.1) family.

It localises to the cell membrane. It catalyses the reaction myo-inositol(out) + H(+)(out) = myo-inositol(in) + H(+)(in). In terms of biological role, h(+)-myo-inositol cotransporter. Can also transport related stereoisomers. This Rattus norvegicus (Rat) protein is Proton myo-inositol cotransporter.